The following is a 308-amino-acid chain: MTLLSDNKAVLIAGPTASGKSALALELAQKAGAVIINTDSMQVYHDLRVLTARPAPEDEALVPHRLYGHVDAAVNYSAGHYVRDAAQVLDEVRREGRLPVFIGGTGLYFKALTRGLSAVPPVPDDIREAVRLKLDRDGVEALHAELARRDAAAAARLNVRDRTRIARALEVIEATGRPLADWHAETTPPLLPPERTHALFIAPEREALYARIDARFETMLEAGALAEVERLAARGLDPLLPAMKAHGVPALIRYLRGEITREEAATIGKADTRHYAKRQFTWFRHQLPEFEWMSPEAAKGLVRALKVR.

14 to 21 (GPTASGKS) contributes to the ATP binding site. Residue 16–21 (TASGKS) participates in substrate binding. An interaction with substrate tRNA region spans residues 39 to 42 (DSMQ).

Belongs to the IPP transferase family. As to quaternary structure, monomer. Requires Mg(2+) as cofactor.

The catalysed reaction is adenosine(37) in tRNA + dimethylallyl diphosphate = N(6)-dimethylallyladenosine(37) in tRNA + diphosphate. In terms of biological role, catalyzes the transfer of a dimethylallyl group onto the adenine at position 37 in tRNAs that read codons beginning with uridine, leading to the formation of N6-(dimethylallyl)adenosine (i(6)A). This Bradyrhizobium sp. (strain ORS 278) protein is tRNA dimethylallyltransferase.